Consider the following 131-residue polypeptide: Small ribosomal subunit protein eS8 (131 aa).

The tract at residues 15–36 is disordered; that stretch reads PSGGKKGRVRKTKKKALGGGPP. The segment covering 17–30 has biased composition (basic residues); the sequence is GGKKGRVRKTKKKA.

Belongs to the eukaryotic ribosomal protein eS8 family. Part of the 30S ribosomal subunit.

The sequence is that of Small ribosomal subunit protein eS8 from Pyrobaculum calidifontis (strain DSM 21063 / JCM 11548 / VA1).